The primary structure comprises 690 residues: Methionine--tRNA ligase (690 aa).

Residues 12–22 carry the 'HIGH' region motif; it reads PYANGSIHLGH. Positions 143, 146, 156, and 159 each coordinate Zn(2+). Residues 328–332 carry the 'KMSKS' region motif; the sequence is KMSKS. Lysine 331 contacts ATP. One can recognise a tRNA-binding domain in the interval 582-690; that stretch reads DFAKVDLRIA…SGAEPGMKVK (109 aa).

It belongs to the class-I aminoacyl-tRNA synthetase family. MetG type 1 subfamily. In terms of assembly, homodimer. Zn(2+) serves as cofactor.

It is found in the cytoplasm. It carries out the reaction tRNA(Met) + L-methionine + ATP = L-methionyl-tRNA(Met) + AMP + diphosphate. Functionally, is required not only for elongation of protein synthesis but also for the initiation of all mRNA translation through initiator tRNA(fMet) aminoacylation. This Thiobacillus denitrificans (strain ATCC 25259 / T1) protein is Methionine--tRNA ligase.